The following is a 646-amino-acid chain: Phosphomethylpyrimidine synthase (646 aa).

Residues 1-13 (MNIRSNPDTTRPA) show a composition bias toward polar residues. The tract at residues 1–30 (MNIRSNPDTTRPAVTTGALPSSRKMFSAPD) is disordered. Residues N221, M250, Y279, H315, 335-337 (SRG), 376-379 (DGLR), and E415 contribute to the substrate site. H419 is a Zn(2+) binding site. Y442 lines the substrate pocket. H483 contributes to the Zn(2+) binding site. 3 residues coordinate [4Fe-4S] cluster: C563, C566, and C571.

The protein belongs to the ThiC family. Homodimer. [4Fe-4S] cluster serves as cofactor.

The catalysed reaction is 5-amino-1-(5-phospho-beta-D-ribosyl)imidazole + S-adenosyl-L-methionine = 4-amino-2-methyl-5-(phosphooxymethyl)pyrimidine + CO + 5'-deoxyadenosine + formate + L-methionine + 3 H(+). It functions in the pathway cofactor biosynthesis; thiamine diphosphate biosynthesis. Functionally, catalyzes the synthesis of the hydroxymethylpyrimidine phosphate (HMP-P) moiety of thiamine from aminoimidazole ribotide (AIR) in a radical S-adenosyl-L-methionine (SAM)-dependent reaction. The protein is Phosphomethylpyrimidine synthase of Nitrobacter winogradskyi (strain ATCC 25391 / DSM 10237 / CIP 104748 / NCIMB 11846 / Nb-255).